We begin with the raw amino-acid sequence, 552 residues long: Urocanate hydratase (552 aa).

NAD(+) contacts are provided by residues 49–50, Q127, 173–175, D193, 239–240, 260–264, 270–271, and Y319; these read GG, GMG, NA, QTSAH, and YI. The active site involves C407. G489 contacts NAD(+).

Belongs to the urocanase family. NAD(+) is required as a cofactor.

The protein resides in the cytoplasm. The catalysed reaction is 4-imidazolone-5-propanoate = trans-urocanate + H2O. It functions in the pathway amino-acid degradation; L-histidine degradation into L-glutamate; N-formimidoyl-L-glutamate from L-histidine: step 2/3. Functionally, catalyzes the conversion of urocanate to 4-imidazolone-5-propionate. This chain is Urocanate hydratase, found in Bacillus cereus (strain AH820).